Here is a 238-residue protein sequence, read N- to C-terminus: MTPHISAKKDDISKVVLMPGDPLRAKWIAEQFLDQAKLVNEVRGMFAYTGQYKSKTVTVMGHGMGIPSIGIYSYELMNFYEVETIIRIGSCGALAPQLKLKDLVIASKAWSESIYAKDMGVEIPEDKILFATSSLVELAKETAIKNKLDFHEGLVFCEDAFYQTRKDVISLAKEKNSLAVEMEAHALYANAILLKKKALTLLTVSDSLVTHEALSSELRQKSFKQMALLALEMTQKLI.

His-4 lines the a purine D-ribonucleoside pocket. Phosphate-binding positions include Gly-20, Arg-24, Arg-43, and 87-90; that span reads RIGS. A purine D-ribonucleoside is bound by residues 181 to 183 and 205 to 206; these read EME and SD. Residue Asp-206 is the Proton donor of the active site.

Belongs to the PNP/UDP phosphorylase family. In terms of assembly, homohexamer; trimer of homodimers.

The catalysed reaction is a purine D-ribonucleoside + phosphate = a purine nucleobase + alpha-D-ribose 1-phosphate. It carries out the reaction a purine 2'-deoxy-D-ribonucleoside + phosphate = a purine nucleobase + 2-deoxy-alpha-D-ribose 1-phosphate. In terms of biological role, catalyzes the reversible phosphorolytic breakdown of the N-glycosidic bond in the beta-(deoxy)ribonucleoside molecules, with the formation of the corresponding free purine bases and pentose-1-phosphate. The polypeptide is Purine nucleoside phosphorylase DeoD-type (Mycoplasma genitalium (strain ATCC 33530 / DSM 19775 / NCTC 10195 / G37) (Mycoplasmoides genitalium)).